The chain runs to 384 residues: Cobalt-precorrin-5B C(1)-methyltransferase (384 aa).

Belongs to the CbiD family.

It carries out the reaction Co-precorrin-5B + S-adenosyl-L-methionine = Co-precorrin-6A + S-adenosyl-L-homocysteine. The protein operates within cofactor biosynthesis; adenosylcobalamin biosynthesis; cob(II)yrinate a,c-diamide from sirohydrochlorin (anaerobic route): step 6/10. In terms of biological role, catalyzes the methylation of C-1 in cobalt-precorrin-5B to form cobalt-precorrin-6A. The polypeptide is Cobalt-precorrin-5B C(1)-methyltransferase (Ruminiclostridium cellulolyticum (strain ATCC 35319 / DSM 5812 / JCM 6584 / H10) (Clostridium cellulolyticum)).